Here is a 212-residue protein sequence, read N- to C-terminus: Thymidylate kinase (212 aa).

Residue Ala2 is modified to N-acetylalanine. Residues 16 to 21 (RAGKST) and Arg97 each bind ATP. Residues 133–157 (LQLQLADAAKRGAFGHERYENGAFQ) are LID. Lys169 bears the N6-acetyllysine mark. Residues Lys182 and Arg192 each coordinate ATP.

The protein belongs to the thymidylate kinase family. In terms of assembly, homodimer. Requires Mg(2+) as cofactor.

It carries out the reaction dTMP + ATP = dTDP + ADP. The protein operates within pyrimidine metabolism; dTTP biosynthesis. Catalyzes the phosphorylation of thymidine monophosphate (dTMP) to thymidine diphosphate (dTDP), the immediate precursor for the DNA building block dTTP, with ATP as the preferred phosphoryl donor in the presence of Mg(2+). This Homo sapiens (Human) protein is Thymidylate kinase (DTYMK).